Consider the following 243-residue polypeptide: PHO85 cyclin-like protein psl1 (243 aa).

Over residues 211–224 (ESPISHTPQQNQQD) the composition is skewed to polar residues. A disordered region spans residues 211–231 (ESPISHTPQQNQQDEQPRRPI).

The protein belongs to the cyclin family. PHO80 subfamily. As to quaternary structure, forms a cyclin-CDK complex with pef1.

It localises to the cytoplasm. It is found in the nucleus. Cyclin partner of the cyclin-dependent kinase (CDK) pef1 (PHO85 homolog). This is PHO85 cyclin-like protein psl1 (psl1) from Schizosaccharomyces pombe (strain 972 / ATCC 24843) (Fission yeast).